We begin with the raw amino-acid sequence, 291 residues long: Putative carboxymethylenebutenolidase (291 aa).

Residues 1-40 form the signal peptide; sequence MTAFDADLRSLAAQTTLSRRTVIATSLATGFALAVQPVAA. Residues Cys170, Asp227, and His259 contribute to the active site.

The protein belongs to the dienelactone hydrolase family.

It catalyses the reaction 2-(5-oxo-2,5-dihydrofuran-2-ylidene)acetate + H2O = 4-oxohex-2-enedioate + H(+). This chain is Putative carboxymethylenebutenolidase, found in Methylorubrum extorquens (strain ATCC 14718 / DSM 1338 / JCM 2805 / NCIMB 9133 / AM1) (Methylobacterium extorquens).